We begin with the raw amino-acid sequence, 554 residues long: DM7 family protein GG17593 (554 aa).

The protein belongs to the DM7 family.

In Drosophila erecta (Fruit fly), this protein is DM7 family protein GG17593.